The chain runs to 155 residues: 3-dehydroquinate dehydratase (155 aa).

Residue tyrosine 22 is the Proton acceptor of the active site. Positions 73, 79, and 86 each coordinate substrate. The active-site Proton donor is the histidine 99. Substrate contacts are provided by residues 100 to 101 (IS) and arginine 110.

Belongs to the type-II 3-dehydroquinase family. Homododecamer.

It carries out the reaction 3-dehydroquinate = 3-dehydroshikimate + H2O. It participates in metabolic intermediate biosynthesis; chorismate biosynthesis; chorismate from D-erythrose 4-phosphate and phosphoenolpyruvate: step 3/7. Its function is as follows. Catalyzes a trans-dehydration via an enolate intermediate. This is 3-dehydroquinate dehydratase from Campylobacter hominis (strain ATCC BAA-381 / DSM 21671 / CCUG 45161 / LMG 19568 / NCTC 13146 / CH001A).